Consider the following 1002-residue polypeptide: ATP-dependent DNA helicase MPH1 (1002 aa).

In terms of domain architecture, Helicase ATP-binding spans 108–275 (IVRCALFENV…EVVNNLHISK (168 aa)). An ATP-binding site is contributed by 121-128 (IPTGTGKT). The short motif at 223–226 (DEAH) is the DEAH box element. Residues 506 to 669 (DEETYIRKNK…ALEYTKSDRI (164 aa)) enclose the Helicase C-terminal domain. Positions 531–551 (ENRVEEEKKRQKEQAKLERTG) are enriched in basic and acidic residues. 2 disordered regions span residues 531–569 (ENRV…NQKQ) and 799–843 (AKSQ…DSHT). Over residues 553 to 568 (RTGSSEEAQLSGMNQK) the composition is skewed to polar residues.

This sequence belongs to the DEAD box helicase family. DEAH subfamily. FANCM sub-subfamily. Interacts with the MHF histone-fold complex to form the FANCM-MHF complex.

The protein resides in the nucleus. The enzyme catalyses ATP + H2O = ADP + phosphate + H(+). ATP-dependent DNA helicase involved in DNA damage repair by homologous recombination and in genome maintenance. Capable of unwinding D-loops. Plays a role in limiting crossover recombinants during mitotic DNA double-strand break (DSB) repair. Component of a FANCM-MHF complex which promotes gene conversion at blocked replication forks, probably by reversal of the stalled fork. The sequence is that of ATP-dependent DNA helicase MPH1 from Kluyveromyces lactis (strain ATCC 8585 / CBS 2359 / DSM 70799 / NBRC 1267 / NRRL Y-1140 / WM37) (Yeast).